Reading from the N-terminus, the 481-residue chain is UDP-N-acetylmuramoyl-L-alanyl-D-glutamate--L-lysine ligase (481 aa).

A UDP-N-acetyl-alpha-D-muramoyl-L-alanyl-D-glutamate-binding site is contributed by Ser42. 118–124 (GTKGKTT) lines the ATP pocket. UDP-N-acetyl-alpha-D-muramoyl-L-alanyl-D-glutamate is bound by residues Gln158, 160–161 (TT), Ser187, and Arg195. Lys229 is modified (N6-carboxylysine). An L-lysine recognition motif motif is present at residues 404 to 407 (DDPN).

This sequence belongs to the MurCDEF family. MurE subfamily. Carboxylation is probably crucial for Mg(2+) binding and, consequently, for the gamma-phosphate positioning of ATP.

The protein resides in the cytoplasm. The catalysed reaction is UDP-N-acetyl-alpha-D-muramoyl-L-alanyl-D-glutamate + L-lysine + ATP = UDP-N-acetyl-alpha-D-muramoyl-L-alanyl-gamma-D-glutamyl-L-lysine + ADP + phosphate + H(+). The protein operates within cell wall biogenesis; peptidoglycan biosynthesis. Its function is as follows. Catalyzes the addition of L-lysine to the nucleotide precursor UDP-N-acetylmuramoyl-L-alanyl-D-glutamate (UMAG) in the biosynthesis of bacterial cell-wall peptidoglycan. The protein is UDP-N-acetylmuramoyl-L-alanyl-D-glutamate--L-lysine ligase of Streptococcus pyogenes serotype M4 (strain MGAS10750).